A 420-amino-acid polypeptide reads, in one-letter code: Ketoreductase sphF (420 aa).

Positions 1-21 (MLERPSFPRLGAGTRHHRPLG) are disordered. The chain crosses the membrane as a helical span at residues 29–49 (WLLAFTGISGIAGMMIPYVPW). Residues 275–298 (RQKRSPSPGRHPALGSPPAQLRQD) are disordered.

Its subcellular location is the membrane. The catalysed reaction is 3-oxopresphingofungin + NADPH + 2 H(+) = presphingofungin + NADP(+). It participates in secondary metabolite biosynthesis. Functionally, ketoreductase; part of the gene cluster that mediates the biosynthesis of sphingofungins, bioactive molecules acting as sphingolipid inhibitors via inhibiting serine palmitoyl transferase (SPT). Within the pathway, sphF catalyzes the reduction of the C-3 ketone of 3-keto-presphingofungin to produce presphingofungin. Sphingofungin biosynthesis starts with the PKS sphB that produces an C18 polyketide precursor 3-hydroxyoctadeca-4,10-dienoyl-ACP containing one delta-6 desaturation and one delta-12 desaturation. The aminoacyl transferase sphA uses the sphB product to produce 3-keto-presphingofungin by adding an aminomalonate molecule. SphF then reduces the C-3 ketone of 3-keto-presphingofungin which leads to presphingofungin. The cytochrome P450 monooxygenase sphH converts presphingofungin into sphingofungin B1 which is further converted to sphingofungin B by the dioxygenase sphC. SphC is also able to convert presphingofungin into sphingofungin B2. The acetyltransferase sphE acetylates sphingofungin B to produce sphingofungin C, but can also convert sphingofungin B1 into sphingofungin C1 and sphingofungin B2 into sphingofungin C2. Finally, sphingofungin C can be spontaneously converted into sphingofungin D. The chain is Ketoreductase sphF from Aspergillus fumigatus (strain CBS 144.89 / FGSC A1163 / CEA10) (Neosartorya fumigata).